The primary structure comprises 353 residues: NADH-ubiquinone oxidoreductase chain 2 (353 aa).

A run of 8 helical transmembrane segments spans residues 4–24 (SVVLILLLNIIVSVVIVLSSH), 60–80 (FLVQAFSAAMILNVALVQLWL), 96–116 (IVLTLALCLKLGLFPCHFWFP), 139–159 (FIILVSVCNIISINVLTTLGC), 198–218 (IYVGCIMFVVYIVLSSTVFLI), 241–261 (GNVLVLVILSLGGLPPLTGFL), 274–294 (NLLVPCAILIVGSLLSLFFYL), and 330–350 (VLLSILSSMSILGLLLVPALW).

It belongs to the complex I subunit 2 family.

It localises to the mitochondrion inner membrane. The catalysed reaction is a ubiquinone + NADH + 5 H(+)(in) = a ubiquinol + NAD(+) + 4 H(+)(out). Its function is as follows. Core subunit of the mitochondrial membrane respiratory chain NADH dehydrogenase (Complex I) that is believed to belong to the minimal assembly required for catalysis. Complex I functions in the transfer of electrons from NADH to the respiratory chain. The immediate electron acceptor for the enzyme is believed to be ubiquinone. This Pisaster ochraceus (Ochre sea star) protein is NADH-ubiquinone oxidoreductase chain 2 (ND2).